Here is a 223-residue protein sequence, read N- to C-terminus: UPF0758 protein Plut_0598 (223 aa).

The 123-residue stretch at 100 to 222 (RVQGAKDVFE…WFSFRESNLL (123 aa)) folds into the MPN domain. Residues His-171, His-173, and Asp-184 each coordinate Zn(2+). Positions 171-184 (HNHPSGDTEPSNAD) match the JAMM motif motif.

It belongs to the UPF0758 family.

This is UPF0758 protein Plut_0598 from Chlorobium luteolum (strain DSM 273 / BCRC 81028 / 2530) (Pelodictyon luteolum).